Reading from the N-terminus, the 289-residue chain is Shikimate dehydrogenase (NADP(+)) (289 aa).

Residues 19–21 (SLS) and T66 each bind shikimate. The active-site Proton acceptor is K70. Shikimate-binding residues include N91 and D106. NADP(+)-binding positions include 131-135 (GNGGA) and L229. Y231 serves as a coordination point for shikimate. NADP(+) is bound at residue G252.

Belongs to the shikimate dehydrogenase family. Homodimer.

The catalysed reaction is shikimate + NADP(+) = 3-dehydroshikimate + NADPH + H(+). It participates in metabolic intermediate biosynthesis; chorismate biosynthesis; chorismate from D-erythrose 4-phosphate and phosphoenolpyruvate: step 4/7. Its function is as follows. Involved in the biosynthesis of the chorismate, which leads to the biosynthesis of aromatic amino acids. Catalyzes the reversible NADPH linked reduction of 3-dehydroshikimate (DHSA) to yield shikimate (SA). This Trichormus variabilis (strain ATCC 29413 / PCC 7937) (Anabaena variabilis) protein is Shikimate dehydrogenase (NADP(+)).